We begin with the raw amino-acid sequence, 694 residues long: Lon-like protease BrxL (694 aa).

Belongs to the BrxL family.

Its function is as follows. BREX systems (bacteriophage exclusion) provide immunity against bacteriophage. Part of a type 1 BREX system which protects against dsDNA phage. This system allows phage adsorption but prevents phage DNA replication, without degradation of the phage DNA. Methylation of bacterial DNA by PglX guides self/non-self discrimination. When the brxA-brxB-brxC-pglX-pglZ-brxL genes are transformed into a susceptible E.coli strain (BW25113) they confer very high resistance to infection by bacteriophage VR7 and VpaE1, about 100-fold protection against lambda, T5 and T7 and no protection against RNA phage Qbeta, ssDNA phage M13 or dSDNA phage T4 and VR5. Glycosylated phage DNA is not susceptible to BREX. The BREX system does not confer resistance to lysogenic lambda phage, i.e. prophage that are integrated into the chromosomal DNA and then induced to form phage. Expression of this protein alone is toxic. The polypeptide is Lon-like protease BrxL (Escherichia coli O9:H4 (strain HS)).